The following is a 341-amino-acid chain: Anthranilate phosphoribosyltransferase (341 aa).

Residues G79, 82 to 83 (GD), T87, 89 to 92 (NIST), 107 to 115 (KHGNRAVSS), and S119 each bind 5-phospho-alpha-D-ribose 1-diphosphate. Position 79 (G79) interacts with anthranilate. Residue S91 coordinates Mg(2+). Position 110 (N110) interacts with anthranilate. An anthranilate-binding site is contributed by R165. Mg(2+)-binding residues include D224 and E225.

It belongs to the anthranilate phosphoribosyltransferase family. Homodimer. It depends on Mg(2+) as a cofactor.

It catalyses the reaction N-(5-phospho-beta-D-ribosyl)anthranilate + diphosphate = 5-phospho-alpha-D-ribose 1-diphosphate + anthranilate. It participates in amino-acid biosynthesis; L-tryptophan biosynthesis; L-tryptophan from chorismate: step 2/5. In terms of biological role, catalyzes the transfer of the phosphoribosyl group of 5-phosphorylribose-1-pyrophosphate (PRPP) to anthranilate to yield N-(5'-phosphoribosyl)-anthranilate (PRA). The protein is Anthranilate phosphoribosyltransferase of Bacillus thuringiensis subsp. konkukian (strain 97-27).